The primary structure comprises 568 residues: Tetratricopeptide repeat protein 22 (568 aa).

7 TPR repeats span residues 66–99 (PAVRHLLGTFSFYLEELGDAREHFLEVARKDPGN), 101–133 (NAWANLAHVYGQLGQEEEEEASAGRLASLMGLE), 155–190 (YAHGFDVGCASPEERAQVLEAGIALYDKALGYGQQI), 203–237 (ATLFIRLDGIFLEMGSEEQKRLPAFNRTLALLGEV), 260–294 (KDTFSTTPMGVHEYGYSGTEPLDCFGKAIEIAKNQ), 296–328 (PILNRLAKIFHFLGKQDMAVGTCNMVLAVLTDP), and 432–465 (PELQLLRGKCLRVQGEDANAAACFKRAVELDDEG).

In Mus musculus (Mouse), this protein is Tetratricopeptide repeat protein 22 (Ttc22).